The primary structure comprises 193 residues: Ion-translocating oxidoreductase complex subunit A (193 aa).

A run of 6 helical transmembrane segments spans residues 5-25 (LLLF…FLGL), 39-59 (MGMG…AWLI), 63-83 (ILIP…VIAV), 102-122 (LLGI…VALL), 134-154 (ALYG…FAAI), and 171-191 (AIAL…SGLV).

The protein belongs to the NqrDE/RnfAE family. As to quaternary structure, the complex is composed of six subunits: RsxA, RsxB, RsxC, RsxD, RsxE and RsxG.

The protein resides in the cell inner membrane. In terms of biological role, part of a membrane-bound complex that couples electron transfer with translocation of ions across the membrane. Required to maintain the reduced state of SoxR. This Escherichia fergusonii (strain ATCC 35469 / DSM 13698 / CCUG 18766 / IAM 14443 / JCM 21226 / LMG 7866 / NBRC 102419 / NCTC 12128 / CDC 0568-73) protein is Ion-translocating oxidoreductase complex subunit A.